The chain runs to 246 residues: 23S rRNA (guanosine-2'-O-)-methyltransferase RlmB (246 aa).

S-adenosyl-L-methionine-binding residues include Gly197, Ile217, and Leu226.

This sequence belongs to the class IV-like SAM-binding methyltransferase superfamily. RNA methyltransferase TrmH family. RlmB subfamily.

The protein localises to the cytoplasm. It carries out the reaction guanosine(2251) in 23S rRNA + S-adenosyl-L-methionine = 2'-O-methylguanosine(2251) in 23S rRNA + S-adenosyl-L-homocysteine + H(+). Specifically methylates the ribose of guanosine 2251 in 23S rRNA. The polypeptide is 23S rRNA (guanosine-2'-O-)-methyltransferase RlmB (Haemophilus ducreyi (strain 35000HP / ATCC 700724)).